The primary structure comprises 1270 residues: DNA-directed RNA polymerase subunit beta (1270 aa).

The protein belongs to the RNA polymerase beta chain family. The RNAP catalytic core consists of 2 alpha, 1 beta, 1 beta' and 1 omega subunit. When a sigma factor is associated with the core the holoenzyme is formed, which can initiate transcription.

The catalysed reaction is RNA(n) + a ribonucleoside 5'-triphosphate = RNA(n+1) + diphosphate. Functionally, DNA-dependent RNA polymerase catalyzes the transcription of DNA into RNA using the four ribonucleoside triphosphates as substrates. The protein is DNA-directed RNA polymerase subunit beta of Flavobacterium johnsoniae (strain ATCC 17061 / DSM 2064 / JCM 8514 / BCRC 14874 / CCUG 350202 / NBRC 14942 / NCIMB 11054 / UW101) (Cytophaga johnsonae).